The primary structure comprises 563 residues: Arginine--tRNA ligase (563 aa).

Positions 122–132 (PNIAKPISMGH) match the 'HIGH' region motif.

It belongs to the class-I aminoacyl-tRNA synthetase family. In terms of assembly, monomer.

The protein resides in the cytoplasm. The catalysed reaction is tRNA(Arg) + L-arginine + ATP = L-arginyl-tRNA(Arg) + AMP + diphosphate. The sequence is that of Arginine--tRNA ligase from Enterococcus faecalis (strain ATCC 700802 / V583).